A 223-amino-acid polypeptide reads, in one-letter code: Ubiquitin carboxyl-terminal hydrolase isozyme L1 (223 aa).

M1 is modified (N-acetylmethionine). The UCH catalytic domain maps to Q2–K221. Residues P5–P10 are interaction with ubiquitin. Residue C90 is the Nucleophile of the active site. Residue S125 is modified to Phosphoserine. H161 acts as the Proton donor in catalysis. The tract at residues E211 to A216 is interaction with ubiquitin. C220 carries S-farnesyl cysteine lipidation. The propeptide at K221–A223 is removed in mature form.

This sequence belongs to the peptidase C12 family. Monomer. Homodimer. Interacts with COPS5 and SNCA. Post-translationally, O-glycosylated.

The protein localises to the cytoplasm. Its subcellular location is the endoplasmic reticulum membrane. It catalyses the reaction Thiol-dependent hydrolysis of ester, thioester, amide, peptide and isopeptide bonds formed by the C-terminal Gly of ubiquitin (a 76-residue protein attached to proteins as an intracellular targeting signal).. Ubiquitin-protein hydrolase involved both in the processing of ubiquitin precursors and of ubiquitinated proteins. This enzyme is a thiol protease that recognizes and hydrolyzes a peptide bond at the C-terminal glycine of ubiquitin. Also binds to free monoubiquitin and may prevent its degradation in lysosomes. The homodimer may have ATP-independent ubiquitin ligase activity. The protein is Ubiquitin carboxyl-terminal hydrolase isozyme L1 (UCHL1) of Sus scrofa (Pig).